Here is a 312-residue protein sequence, read N- to C-terminus: Probable HTH-type transcriptional regulator LrhA (312 aa).

The HTH lysR-type domain maps to 11–68; sequence LDLDLLRTFVAVADLNTFAAAAAAVCRTQSAVSQQMQRLEQLVGKELFARHGRNKLLT. The H-T-H motif DNA-binding region spans 28–47; the sequence is FAAAAAAVCRTQSAVSQQMQ.

Belongs to the LysR transcriptional regulatory family.

In terms of biological role, not known, does not seem to act on the proton translocating NADH dehydrogenase genes (nuoA-N) which are part of the lrhA operon. This chain is Probable HTH-type transcriptional regulator LrhA (lrhA), found in Escherichia coli (strain K12).